A 259-amino-acid chain; its full sequence is Thrombin-like enzyme gyroxin B1.7 (259 aa).

The signal sequence occupies residues 1-18 (MVLIRVLANLLILQLSYA). Residues 19–259 (QKSSELVIGG…AGNTAVTCPP (241 aa)) constitute a propeptide that is removed on maturation. One can recognise a Peptidase S1 domain in the interval 25–250 (VIGGDECNIN…DTEWIQSIIA (226 aa)). 5 cysteine pairs are disulfide-bonded: cysteine 31–cysteine 162, cysteine 49–cysteine 65, cysteine 141–cysteine 211, cysteine 173–cysteine 190, and cysteine 201–cysteine 226. Catalysis depends on histidine 64, which acts as the Charge relay system. N-linked (GlcNAc...) asparagine glycosylation is present at asparagine 102. The Charge relay system role is filled by aspartate 109. The active-site Charge relay system is the serine 205.

The protein belongs to the peptidase S1 family. Snake venom subfamily. Monomer. Expressed by the venom gland.

It localises to the secreted. Thrombin-like snake venom serine protease. Displays a specificity similar to trypsin. Releases only fibrinopeptide A in the conversion of fibrinogen to fibrin. Shows coagulant, esterase and amidase activities. Reversibly increases the permeability of the blood brain barrier (BBB) in mice. Induces the barrel rotation syndrome in mice, which is manifested by gyroxin-like, rapid rolling motions. This syndrome may be due to its effect on BBB permeability, and certainly also to other actions affecting endogenous substrates present in the endothelium, nervous tissues or blood. The chain is Thrombin-like enzyme gyroxin B1.7 from Crotalus durissus terrificus (South American rattlesnake).